The sequence spans 585 residues: FAD-linked oxidoreductase apf9 (585 aa).

A signal peptide spans 1-19 (MKPHTVSLVLSNLASLAAA). Residues asparagine 40, asparagine 92, and asparagine 117 are each glycosylated (N-linked (GlcNAc...) asparagine). The 187-residue stretch at 108-294 (IGNSPVYVVN…TEITVKTYPT (187 aa)) folds into the FAD-binding PCMH-type domain. Histidine 145 is subject to Pros-8alpha-FAD histidine. N-linked (GlcNAc...) asparagine glycosylation is found at asparagine 352, asparagine 412, and asparagine 495.

This sequence belongs to the oxygen-dependent FAD-linked oxidoreductase family. FAD serves as cofactor.

It functions in the pathway secondary metabolite biosynthesis. Functionally, FAD-linked oxidoreductase; part of the gene cluster that mediates the biosynthesis of the cyclic tetrapeptide apicidin F (APF). The non-ribosomal peptide synthetase apf1 incorporates four different amino acids to produce apicidin F: L-phenylalanine, D-pipecolic acid (D-pip), N-methoxy-L-tryptophan and L-2-aminooctanedioic acid. L-Phenylalanine is the only proteinogenic amino acid directly used by apf1. The 3 other apf1 substrates are non-proteinogenic and have to be modified by other enzymes of the cluster. Lysine is converted to delta-1-pyrroline-5-carboxylate (P5C) which is reduced to L-pipecolic acid (L-pip) by apf3. L-pip is epimerized to D-pip, probably by apf1 activity, prior to incorporation. L-Tryptophan is N-oxidyzed by one of the cytochrome P450 monooxygenases (apf7 or apf8), and further methylated at the hydroxy group by the O-methyltransferase apf6 to yield N-methoxy-L-tryptophan. The synthesis of the fourth apf1 substrate is more complex. The fatty acid synthase apf5 is involved in the synthesis of the octanoic acid backbone of L-2-aminooctanedioic acid by fixing one acetyl-CoA unit and three malonyl-CoA units. Then one of the cytochrome P450 monooxygenases (apf7 or apf8) may oxidize this backbone to 2-oxooctanoic acid. The aminotransferase apf4 is predicted to catalyze the exchange of the keto group with an amino group. The next step would be the oxidation of 2-aminooctanoic acid by one of the cytochrome P450 monooxygenases (apf7 or apf8). The last step is the oxidation of 2-amino-8-hydroxyoctanoic acid to 2-aminooctanedioic acid is catalyzed by the FAD-dependent monooxygenase apf9. The sequence is that of FAD-linked oxidoreductase apf9 from Gibberella fujikuroi (strain CBS 195.34 / IMI 58289 / NRRL A-6831) (Bakanae and foot rot disease fungus).